A 160-amino-acid polypeptide reads, in one-letter code: Cytochrome b6-f complex subunit 4 (160 aa).

Transmembrane regions (helical) follow at residues 36-56 (LLYM…GLSV), 95-115 (LLGV…PFIE), and 131-151 (ILFL…TFPI).

Belongs to the cytochrome b family. PetD subfamily. The 4 large subunits of the cytochrome b6-f complex are cytochrome b6, subunit IV (17 kDa polypeptide, petD), cytochrome f and the Rieske protein, while the 4 small subunits are petG, petL, petM and petN. The complex functions as a dimer. The N-terminus is blocked.

The protein localises to the plastid. Its subcellular location is the chloroplast thylakoid membrane. In terms of biological role, component of the cytochrome b6-f complex, which mediates electron transfer between photosystem II (PSII) and photosystem I (PSI), cyclic electron flow around PSI, and state transitions. This chain is Cytochrome b6-f complex subunit 4, found in Chlamydomonas reinhardtii (Chlamydomonas smithii).